Here is a 90-residue protein sequence, read N- to C-terminus: Probable Fe(2+)-trafficking protein (90 aa).

This sequence belongs to the Fe(2+)-trafficking protein family.

Functionally, could be a mediator in iron transactions between iron acquisition and iron-requiring processes, such as synthesis and/or repair of Fe-S clusters in biosynthetic enzymes. The protein is Probable Fe(2+)-trafficking protein of Pseudomonas entomophila (strain L48).